Here is a 172-residue protein sequence, read N- to C-terminus: Large ribosomal subunit protein uL10 (172 aa).

It belongs to the universal ribosomal protein uL10 family. As to quaternary structure, part of the ribosomal stalk of the 50S ribosomal subunit. The N-terminus interacts with L11 and the large rRNA to form the base of the stalk. The C-terminus forms an elongated spine to which L12 dimers bind in a sequential fashion forming a multimeric L10(L12)X complex.

Functionally, forms part of the ribosomal stalk, playing a central role in the interaction of the ribosome with GTP-bound translation factors. The polypeptide is Large ribosomal subunit protein uL10 (rplJ) (Liberibacter africanus subsp. capensis).